The primary structure comprises 224 residues: Flagellar L-ring protein (224 aa).

A signal peptide spans 1-15; that stretch reads MARYLVLAVALLLAA. Cysteine 16 is lipidated: N-palmitoyl cysteine. The S-diacylglycerol cysteine moiety is linked to residue cysteine 16.

This sequence belongs to the FlgH family. As to quaternary structure, the basal body constitutes a major portion of the flagellar organelle and consists of four rings (L,P,S, and M) mounted on a central rod.

It localises to the cell outer membrane. It is found in the bacterial flagellum basal body. In terms of biological role, assembles around the rod to form the L-ring and probably protects the motor/basal body from shearing forces during rotation. This is Flagellar L-ring protein from Shewanella baltica (strain OS185).